The primary structure comprises 189 residues: Pyridoxal 5'-phosphate synthase subunit PdxT (189 aa).

47 to 49 (GES) contacts L-glutamine. Catalysis depends on C79, which acts as the Nucleophile. L-glutamine contacts are provided by residues R106 and 135 to 136 (IR). Active-site charge relay system residues include H171 and E173.

Belongs to the glutaminase PdxT/SNO family. In the presence of PdxS, forms a dodecamer of heterodimers. Only shows activity in the heterodimer.

It catalyses the reaction aldehydo-D-ribose 5-phosphate + D-glyceraldehyde 3-phosphate + L-glutamine = pyridoxal 5'-phosphate + L-glutamate + phosphate + 3 H2O + H(+). The enzyme catalyses L-glutamine + H2O = L-glutamate + NH4(+). The protein operates within cofactor biosynthesis; pyridoxal 5'-phosphate biosynthesis. Catalyzes the hydrolysis of glutamine to glutamate and ammonia as part of the biosynthesis of pyridoxal 5'-phosphate. The resulting ammonia molecule is channeled to the active site of PdxS. This is Pyridoxal 5'-phosphate synthase subunit PdxT from Caldanaerobacter subterraneus subsp. tengcongensis (strain DSM 15242 / JCM 11007 / NBRC 100824 / MB4) (Thermoanaerobacter tengcongensis).